A 1028-amino-acid chain; its full sequence is RNA cytidine acetyltransferase 2 (1028 aa).

ATP contacts are provided by residues 286 to 295 (GRGKSAALGL) and R458. Positions 546-729 (VLLGPVDESQ…FAPFYVSQIP (184 aa)) constitute an N-acetyltransferase domain. Acetyl-CoA-binding positions include 617 to 619 (IAV), 624 to 630 (MKMGYGS), and K717. Positions 982 to 1028 (SGIISVKSTKSENENGFDKSTKKRSSDKRSSSSSKSKSSKKRKSLKE) are disordered. Positions 990-1001 (TKSENENGFDKS) are enriched in basic and acidic residues. The span at 1018–1028 (KSSKKRKSLKE) shows a compositional bias: basic residues.

Belongs to the RNA cytidine acetyltransferase family. NAT10 subfamily.

Its subcellular location is the nucleus. The protein localises to the nucleolus. The enzyme catalyses a cytidine in 18S rRNA + acetyl-CoA + ATP + H2O = an N(4)-acetylcytidine in 18S rRNA + ADP + phosphate + CoA + H(+). It carries out the reaction a cytidine in tRNA + acetyl-CoA + ATP + H2O = an N(4)-acetylcytidine in tRNA + ADP + phosphate + CoA + H(+). Its function is as follows. RNA cytidine acetyltransferase with specificity toward both 18S rRNA and tRNAs. Catalyzes the formation of N(4)-acetylcytidine (ac4C) in 18S rRNA. Required for early nucleolar cleavages of precursor rRNA at sites A0, A1 and A2 during 18S rRNA synthesis. Catalyzes the formation of ac4C in serine and leucine tRNAs. Requires a tRNA-binding adapter protein for full tRNA acetyltransferase activity but not for 18S rRNA acetylation. In Arabidopsis thaliana (Mouse-ear cress), this protein is RNA cytidine acetyltransferase 2.